We begin with the raw amino-acid sequence, 168 residues long: Large ribosomal subunit protein uL10 (168 aa).

It belongs to the universal ribosomal protein uL10 family. As to quaternary structure, part of the ribosomal stalk of the 50S ribosomal subunit. The N-terminus interacts with L11 and the large rRNA to form the base of the stalk. The C-terminus forms an elongated spine to which L12 dimers bind in a sequential fashion forming a multimeric L10(L12)X complex.

Functionally, forms part of the ribosomal stalk, playing a central role in the interaction of the ribosome with GTP-bound translation factors. The sequence is that of Large ribosomal subunit protein uL10 from Photorhabdus laumondii subsp. laumondii (strain DSM 15139 / CIP 105565 / TT01) (Photorhabdus luminescens subsp. laumondii).